The primary structure comprises 745 residues: Meiotic driver SPOK3 (745 aa).

Positions 4–34 (KDRITQLLRELEEAKAREAQERCEKERLQLE) form a coiled coil. Disordered regions lie at residues 173–222 (ELTQ…DGVG) and 407–487 (LSSA…VDPQ). Residues 188 to 197 (TSDRSLERRQ) are compositionally biased toward basic and acidic residues. 2 stretches are compositionally biased toward polar residues: residues 208–217 (KSKYICSNRQ) and 409–422 (SAPS…SEYT). The segment at 214-325 (SNRQPDGVGI…LLLYVDRDDW (112 aa)) is required for antidote activity. The segment covering 466–482 (AKRERGPSSGGKDDGRS) has biased composition (basic and acidic residues). Positions 491–745 (QYCTQACLLG…SPMATPSHGG (255 aa)) are required for poison activity.

It is found in the cytoplasm. The protein resides in the nucleus. Promotes unequal transmission of alleles from the parental zygote to progeny spores by acting as poison/antidote system, leading to poisoning of progeny that do not inherit the allele. May possess DNA nuclease activity that leads to spore killing, and a kinase activity that confers resistance to the nuclease activity. The protein is Meiotic driver SPOK3 of Podospora anserina (Pleurage anserina).